The primary structure comprises 105 residues: U-scoloptoxin(16)-Sm4a (105 aa).

Residues 1–22 form the signal peptide; it reads MWALTVFVTILAAAIPITGVTG.

It belongs to the scoloptoxin-16 family. Post-translationally, contains 4 disulfide bonds. As to expression, expressed by the venom gland.

It localises to the secreted. This Scolopendra morsitans (Tanzanian blue ringleg centipede) protein is U-scoloptoxin(16)-Sm4a.